The sequence spans 644 residues: Translation factor GUF1, mitochondrial (644 aa).

Residues 1–14 (MLRKAFRYLVPVRC) constitute a mitochondrion transit peptide. One can recognise a tr-type G domain in the interval 46–227 (ERYRNFSIVA…AIVDRIPPPT (182 aa)). GTP-binding positions include 55-62 (AHVDHGKS), 120-124 (DTPGH), and 174-177 (NKID).

This sequence belongs to the TRAFAC class translation factor GTPase superfamily. Classic translation factor GTPase family. LepA subfamily.

The protein resides in the mitochondrion inner membrane. The enzyme catalyses GTP + H2O = GDP + phosphate + H(+). Promotes mitochondrial protein synthesis. May act as a fidelity factor of the translation reaction, by catalyzing a one-codon backward translocation of tRNAs on improperly translocated ribosomes. Binds to mitochondrial ribosomes in a GTP-dependent manner. The protein is Translation factor GUF1, mitochondrial of Eremothecium gossypii (strain ATCC 10895 / CBS 109.51 / FGSC 9923 / NRRL Y-1056) (Yeast).